Reading from the N-terminus, the 875-residue chain is cGMP-specific 3',5'-cyclic phosphodiesterase (875 aa).

Disordered stretches follow at residues 1–29 and 78–102; these read MERA…DQDS and SCSC…RKIS. A compositionally biased stretch (low complexity) spans 10–22; it reads QQRQQQQPQQQKQ. The span at 78–101 shows a compositional bias: polar residues; the sequence is SCSCPLQQSPRADNSAPGTPTRKI. S102 is modified (phosphoserine). GAF domains follow at residues 164–314 and 346–503; these read DVTA…GIVL and SLEV…GLGI. Residues 536–860 form the PDEase domain; sequence ETRELQSLAA…QKWQALAEQQ (325 aa). Catalysis depends on H613, which acts as the Proton donor. H617, H653, D654, and D764 together coordinate Zn(2+). Residue D654 participates in Mg(2+) binding. Q817 lines the 3',5'-cyclic GMP pocket.

This sequence belongs to the cyclic nucleotide phosphodiesterase family. Requires Zn(2+) as cofactor. It depends on Mg(2+) as a cofactor. Phosphorylation is regulated by binding of cGMP to the two allosteric sites. Phosphorylation by PRKG1 leads to its activation. As to expression, expressed in aortic smooth muscle cells, heart, placenta, skeletal muscle and pancreas and, to a much lesser extent, in brain, liver and lung.

The enzyme catalyses 3',5'-cyclic GMP + H2O = GMP + H(+). It functions in the pathway purine metabolism; 3',5'-cyclic GMP degradation; GMP from 3',5'-cyclic GMP: step 1/1. With respect to regulation, sildenafil (Viagra) is a highly selective and potent inhibitor of PDE5A and is effective in the treatment of penile erectile dysfunction. Also inhibited by zaprinast. In terms of biological role, plays a role in signal transduction by regulating the intracellular concentration of cyclic nucleotides. This phosphodiesterase catalyzes the specific hydrolysis of cGMP to 5'-GMP. Specifically regulates nitric-oxide-generated cGMP. The sequence is that of cGMP-specific 3',5'-cyclic phosphodiesterase from Homo sapiens (Human).